A 221-amino-acid chain; its full sequence is Lipoprotein-releasing system ATP-binding protein LolD (221 aa).

Residues 6–220 (LILKNISKHY…YKLKHRLLNI (215 aa)) form the ABC transporter domain. An ATP-binding site is contributed by 42-49 (GSSGSGKS).

It belongs to the ABC transporter superfamily. Lipoprotein translocase (TC 3.A.1.125) family. As to quaternary structure, the complex is composed of two ATP-binding proteins (LolD) and two transmembrane proteins (LolC and LolE).

The protein resides in the cell inner membrane. Its function is as follows. Part of the ABC transporter complex LolCDE involved in the translocation of mature outer membrane-directed lipoproteins, from the inner membrane to the periplasmic chaperone, LolA. Responsible for the formation of the LolA-lipoprotein complex in an ATP-dependent manner. The protein is Lipoprotein-releasing system ATP-binding protein LolD of Rickettsia conorii (strain ATCC VR-613 / Malish 7).